Reading from the N-terminus, the 101-residue chain is Small ribosomal subunit protein uS14 (101 aa).

The protein belongs to the universal ribosomal protein uS14 family. Part of the 30S ribosomal subunit. Contacts proteins S3 and S10.

Its function is as follows. Binds 16S rRNA, required for the assembly of 30S particles and may also be responsible for determining the conformation of the 16S rRNA at the A site. The polypeptide is Small ribosomal subunit protein uS14 (Hyphomonas neptunium (strain ATCC 15444)).